Consider the following 122-residue polypeptide: uncharacterized protein (122 aa).

This is an uncharacterized protein from Human adenovirus F serotype 41 (HAdV-41).